The following is a 308-amino-acid chain: Isoflavone reductase-like protein (308 aa).

NADP(+) is bound by residues 11 to 17 (GGTGYIG), arginine 36, and lysine 45. The active-site Proton acceptor is lysine 133. Arginine 137 contacts NADP(+).

The protein belongs to the NmrA-type oxidoreductase family. Isoflavone reductase subfamily. As to quaternary structure, homodimer.

The protein resides in the cytoplasm. In Olea europaea (Common olive), this protein is Isoflavone reductase-like protein.